A 602-amino-acid polypeptide reads, in one-letter code: DNA mismatch repair protein MutL (602 aa).

It belongs to the DNA mismatch repair MutL/HexB family.

Functionally, this protein is involved in the repair of mismatches in DNA. It is required for dam-dependent methyl-directed DNA mismatch repair. May act as a 'molecular matchmaker', a protein that promotes the formation of a stable complex between two or more DNA-binding proteins in an ATP-dependent manner without itself being part of a final effector complex. This is DNA mismatch repair protein MutL from Geotalea uraniireducens (strain Rf4) (Geobacter uraniireducens).